A 350-amino-acid polypeptide reads, in one-letter code: Salicylate decarboxylase (350 aa).

Belongs to the metallo-dependent hydrolases superfamily. In terms of assembly, homotetramer.

It carries out the reaction salicylate + H(+) = phenol + CO2. With respect to regulation, inhibited by AgNO(3), HgCl(2), p-chloromercuribenzoic acid and NiCl(2). In terms of biological role, reversibly catalyzes the regioselective carboxylation of phenol to form salicylic acid. Involved in a pathway for the degradation of salicylate via phenol. Also catalyzes the decarboxylation of beta-resorcylic acid (2,4-dihydroxybenzoic acid) into resorcinol (1,3-dihydroxybenzene), gamma-resorcylic acid (2,6-dihydroxybenzoic acid) into resorcinol, 2,3-dihydroxybenzoic acid into catechol (1,2-dihydroxybenzene), and 4-aminosalicylic acid into 3-aminophenol. The polypeptide is Salicylate decarboxylase (Cutaneotrichosporon moniliiforme (Yeast)).